A 489-amino-acid polypeptide reads, in one-letter code: Ecdysteroid UDP-glucosyltransferase (489 aa).

Positions 1 to 17 (MVFLIIALTLLATGARA) are cleaved as a signal peptide.

This sequence belongs to the UDP-glycosyltransferase family.

Catalyzes the transfer of glucose from UDP-glucose to ecdysteroids which are insect molting hormones. Expression of egt interferes with normal insect development and block molting. The sequence is that of Ecdysteroid UDP-glucosyltransferase (EGT) from Orgyia pseudotsugata (Douglas-fir tussock moth).